The chain runs to 798 residues: PR domain zinc finger protein 4 (798 aa).

Residues 408–525 (KQLVLRQSIV…PENELLFYYS (118 aa)) form the SET domain. 5 consecutive C2H2-type zinc fingers follow at residues 586–608 (WKCSMCPQAFISPSKLHVHFMGH), 614–636 (HKCDFCSKAFSDPSNLRTHLKIH), 642–664 (YRCTLCDKSFTQKAHLESHMVIH), 670–692 (LKCDYCDKLFMRRQDLKQHVLIH), and 698–720 (IKCPKCDKLFLRTNHLKKHLNSH). A C2H2-type 6; degenerate zinc finger spans residues 726 to 747 (YVCEKCTKAYLTKYHLTRHLKA). The segment at 750–798 (EPASSSSAQDDEDEDGDSGEDGLPGSMTTEGCRMSSAVYSADESLSAHK) is disordered. Acidic residues predominate over residues 758-769 (QDDEDEDGDSGE).

Belongs to the class V-like SAM-binding methyltransferase superfamily.

It localises to the nucleus. May function as a transcription factor involved in cell differentiation. The sequence is that of PR domain zinc finger protein 4 (Prdm4) from Rattus norvegicus (Rat).